We begin with the raw amino-acid sequence, 310 residues long: Dihydroorotate dehydrogenase B (NAD(+)), catalytic subunit (310 aa).

Residues serine 19 and 43–44 (KA) contribute to the FMN site. Residues lysine 43 and 67 to 71 (NAIGL) each bind substrate. FMN-binding residues include asparagine 97 and asparagine 125. Asparagine 125 contacts substrate. The Nucleophile role is filled by cysteine 128. FMN is bound by residues lysine 163 and isoleucine 189. 190-191 (NT) lines the substrate pocket. FMN is bound by residues glycine 215, 241–242 (GG), and 263–264 (GT).

This sequence belongs to the dihydroorotate dehydrogenase family. Type 1 subfamily. As to quaternary structure, heterotetramer of 2 PyrK and 2 PyrD type B subunits. Requires FMN as cofactor.

The protein localises to the cytoplasm. The catalysed reaction is (S)-dihydroorotate + NAD(+) = orotate + NADH + H(+). Its pathway is pyrimidine metabolism; UMP biosynthesis via de novo pathway; orotate from (S)-dihydroorotate (NAD(+) route): step 1/1. Its function is as follows. Catalyzes the conversion of dihydroorotate to orotate with NAD(+) as electron acceptor. The sequence is that of Dihydroorotate dehydrogenase B (NAD(+)), catalytic subunit (pyrD) from Bacillus pumilus (strain SAFR-032).